Consider the following 836-residue polypeptide: Protein O-mannosyl-transferase tmtc2 (836 aa).

A helical membrane pass occupies residues 1 to 21; it reads MIAELLSSALGLLLYLNTLGA. Residues 22 to 77 lie on the Extracellular side of the membrane; sequence DFCYDDSRAIKTNQDLLPETPWNHIFFNDFWGTLLTHSGSHKSYRPLCTLSFRLNY. A helical membrane pass occupies residues 78–98; it reads LFGGLDPWNYHLVNVLLHSAV. Over 99-107 the chain is Cytoplasmic; the sequence is TGLFTNLCK. The helical transmembrane segment at 108 to 128 threads the bilayer; that stretch reads ALFGSGCWTLIAGLLFASHPI. Residues 129–132 lie on the Extracellular side of the membrane; the sequence is HTEA. Residues 133–153 form a helical membrane-spanning segment; that stretch reads VSGIVGRADVGSGLFFLLSLL. The Cytoplasmic segment spans residues 154–164; that stretch reads CYMKHCSTRGY. Residues 165–185 traverse the membrane as a helical segment; the sequence is SLSSWCWILCAGFWAACSMLW. Residues 186-188 are Extracellular-facing; that stretch reads KEQ. Residues 189–209 form a helical membrane-spanning segment; sequence GVTVLAVSAVYDVFVFHKLKM. Residues 210–220 are Cytoplasmic-facing; that stretch reads NQIISVVFKEK. Residues 221-241 traverse the membrane as a helical segment; the sequence is NVSFFFSVGLLFAWGVILLGA. Over 242–312 the chain is Extracellular; the sequence is RFYWMGNTPP…KTITDWRNIH (71 aa). Residues 313–333 form a helical membrane-spanning segment; it reads TVAFYILLILLAYSSLKGSAI. The Cytoplasmic portion of the chain corresponds to 334 to 392; it reads KRDCNGKVFMNGKQNTNGHSCQSDLEHKNAEQNPVIASKLENGVKHHNSHEMQLPSTEN. Residues 393-413 form a helical membrane-spanning segment; it reads IVVLALSLLIVPFVPASNLFF. Tyrosine 414 is a topological domain (extracellular). Residues 415–435 form a helical membrane-spanning segment; sequence VGFVIAERVLYIPSMGFCLLV. The Cytoplasmic segment spans residues 436-449; the sequence is TVGARALYIKAQKN. A helical transmembrane segment spans residues 450 to 470; that stretch reads ILKNLLFYATAALIVFYGLKT. Residues 471–836 lie on the Extracellular side of the membrane; the sequence is VVRNGDWKNE…EKQGLKNSKT (366 aa). 9 TPR repeats span residues 493–526, 527–560, 561–594, 606–639, 643–676, 677–710, 711–744, 745–778, and 779–812; these read AKAW…RSNM, ADML…RPTL, ASGY…PDEN, TSCL…MPRQ, QSLY…KPDH, IPAH…DPNK, GNCY…DSSE, FDVV…RQNY, and PAAL…KPDD.

It belongs to the TMTC family.

It is found in the membrane. The protein resides in the endoplasmic reticulum. It carries out the reaction a di-trans,poly-cis-dolichyl beta-D-mannosyl phosphate + L-seryl-[protein] = 3-O-(alpha-D-mannosyl)-L-seryl-[protein] + a di-trans,poly-cis-dolichyl phosphate + H(+). The catalysed reaction is a di-trans,poly-cis-dolichyl beta-D-mannosyl phosphate + L-threonyl-[protein] = 3-O-(alpha-D-mannosyl)-L-threonyl-[protein] + a di-trans,poly-cis-dolichyl phosphate + H(+). Its pathway is protein modification; protein glycosylation. Its function is as follows. Transfers mannosyl residues to the hydroxyl group of serine or threonine residues. The polypeptide is Protein O-mannosyl-transferase tmtc2 (tmtc2) (Xenopus laevis (African clawed frog)).